Here is a 184-residue protein sequence, read N- to C-terminus: Ribose 1,5-bisphosphate phosphokinase PhnN (184 aa).

Residue Gly-11–Asp-18 coordinates ATP.

Belongs to the ribose 1,5-bisphosphokinase family.

It catalyses the reaction alpha-D-ribose 1,5-bisphosphate + ATP = 5-phospho-alpha-D-ribose 1-diphosphate + ADP. It participates in metabolic intermediate biosynthesis; 5-phospho-alpha-D-ribose 1-diphosphate biosynthesis; 5-phospho-alpha-D-ribose 1-diphosphate from D-ribose 5-phosphate (route II): step 3/3. Catalyzes the phosphorylation of ribose 1,5-bisphosphate to 5-phospho-D-ribosyl alpha-1-diphosphate (PRPP). This Burkholderia pseudomallei (strain K96243) protein is Ribose 1,5-bisphosphate phosphokinase PhnN.